Reading from the N-terminus, the 246-residue chain is E3 ubiquitin-protein ligase MARCHF2 (246 aa).

The RING-CH-type zinc finger occupies aspartate 56 to glutamate 116. Zn(2+) contacts are provided by cysteine 64, cysteine 67, cysteine 80, cysteine 82, histidine 90, cysteine 93, cysteine 106, and cysteine 109. The segment at proline 121–valine 246 is required for interaction with IKBKG. Helical transmembrane passes span leucine 138–leucine 158 and alanine 175–valine 195.

As to quaternary structure, interacts with STX6; the interaction promotes MARCHF2-mediated ubiquitination and degradation of CFTR. Interacts with MARCHF3. Interacts with GOPC/CAL; the interaction leads to CFTR ubiquitination and degradation. Interacts with CFTR; the interaction leads to CFTR ubiqtuitination and degradation. Interacts (via PDZ domain) with DLG1 (via PDZ domains); the interaction leads to DLG1 ubiqtuitination and degradation. Interacts with ERGIC3. Interacts with ADRB2. Interacts with IKBKG/NEMO; during the late stages of macrophage viral and bacterial infection; the interaction leads to ubiquitination and degradation of IKBKG/NEMO.

It localises to the endoplasmic reticulum membrane. The protein localises to the lysosome membrane. Its subcellular location is the endosome membrane. It is found in the golgi apparatus membrane. The protein resides in the cytoplasm. It localises to the cell membrane. The catalysed reaction is S-ubiquitinyl-[E2 ubiquitin-conjugating enzyme]-L-cysteine + [acceptor protein]-L-lysine = [E2 ubiquitin-conjugating enzyme]-L-cysteine + N(6)-ubiquitinyl-[acceptor protein]-L-lysine.. Its pathway is protein modification; protein ubiquitination. Functionally, E3 ubiquitin-protein ligase that may mediate ubiquitination of TFRC and CD86, and promote their subsequent endocytosis and sorting to lysosomes via multivesicular bodies. E3 ubiquitin ligases accept ubiquitin from an E2 ubiquitin-conjugating enzyme in the form of a thioester and then directly transfer the ubiquitin to targeted substrates. Together with GOPC/CAL mediates the ubiquitination and lysosomal degradation of CFTR. Ubiquitinates and therefore mediates the degradation of DLG1. Regulates the intracellular trafficking and secretion of alpha1-antitrypsin/SERPINA1 and HP/haptoglobin via ubiquitination and degradation of the cargo receptor ERGIC3. Negatively regulates the antiviral and antibacterial immune response by repression of the NF-kB and type 1 IFN signaling pathways, via MARCHF2-mediated K48-linked polyubiquitination of IKBKG/NEMO, resulting in its proteasomal degradation. May be involved in endosomal trafficking through interaction with STX6. The protein is E3 ubiquitin-protein ligase MARCHF2 (Marchf2) of Mus musculus (Mouse).